The primary structure comprises 452 residues: MKDRHGLLSAPIGRVLLNMSLPNLIGIMTILGFSLADTFFISQLGTEALAAISFTFPVTLIISSIAIGVGAGVSTNLGRLIGSGNAPQAKVFLHDALLLTFILIASLSALGSIFIEPLFSLLGANETSLPLIHDYMMYWYVGAPLLVLLMVGNQGLRSTGDTRSPAMIMTLAAIINLILDPLLIFGIGPFPRLEIQGAAIATLFSWLVALSLSGYLLIIKHRMLERAAFDIDRMRANWSKLAHIAQPAALMNLINPLANAVIMAMLAHIDHSAVAAFGAGTRLESVLLIVVMALSSSLMPFIAQNLGAGQPQRAKQALLLSLKFILVFQTLLYIPLAFFAQPLASLFSTDPQVLEWLSFYILVLPCAYGPLGIVIIFATALNAYHRPMSSLVINLCRLVLLMLPLAALGSYIDGVKGLLLALPITNLLMGIACYYLAQRICEPVKATTADTL.

12 helical membrane-spanning segments follow: residues 21 to 41 (LPNLIGIMTILGFSLADTFFI), 49 to 69 (LAAISFTFPVTLIISSIAIGV), 96 to 116 (ALLLTFILIASLSALGSIFIE), 131 to 151 (LIHDYMMYWYVGAPLLVLLMV), 167 to 187 (MIMTLAAIINLILDPLLIFGI), 199 to 219 (AIATLFSWLVALSLSGYLLII), 248 to 270 (AALMNLINPLANAVIMAMLAHID), 283 to 303 (LESVLLIVVMALSSSLMPFIA), 324 to 344 (FILVFQTLLYIPLAFFAQPLA), 357 to 377 (LSFYILVLPCAYGPLGIVIIF), 392 to 412 (VINLCRLVLLMLPLAALGSYI), and 417 to 437 (GLLLALPITNLLMGIACYYLA).

Belongs to the multi antimicrobial extrusion (MATE) (TC 2.A.66.1) family.

The protein localises to the cell inner membrane. Functionally, flavin adenine dinucleotide (FAD) transporter that facilitates export of flavin electron shuttles. This is FAD transporter from Shewanella oneidensis (strain ATCC 700550 / JCM 31522 / CIP 106686 / LMG 19005 / NCIMB 14063 / MR-1).